Consider the following 1322-residue polypeptide: Serine/threonine-protein phosphatase UIS2 (1322 aa).

A signal peptide spans Met1–Asn22. The interaction with phosphorylated eIF2alpha stretch occupies residues Met1–Met535. Composition is skewed to basic and acidic residues over residues Glu267–Asn279 and Asn288–Asn326. 4 disordered regions span residues Glu267–Asn326, Asn613–Asn646, Asn1066–Asn1087, and Glu1170–Asp1196. A compositionally biased stretch (low complexity) spans Asn631–Asn646.

Requires Mn(2+) as cofactor.

It catalyses the reaction O-phospho-L-seryl-[protein] + H2O = L-seryl-[protein] + phosphate. Its function is as follows. Protein phosphatase which dephosphorylates 'Ser-59' of translation factor eIF2alpha during the liver stage, thus enabling protein translation. This Plasmodium berghei (strain Anka) protein is Serine/threonine-protein phosphatase UIS2.